Consider the following 207-residue polypeptide: Ciliary microtubule-associated protein 3 (207 aa).

Interacts with proteins involved in ciliary transport, including ARL13B, CETN1, KIF3A, RAB6A, RAB8A, TUBB1 and TUBG1. Interacts with AURKA. In terms of tissue distribution, expressed in tissues rich in ciliated cells, such as lung, kidney, vas deferens and testis. Both isoforms 1 and 2 are expressed in testis.

The protein localises to the golgi apparatus. It localises to the golgi stack. Its subcellular location is the trans-Golgi network. It is found in the nucleus. The protein resides in the cytoplasm. The protein localises to the cytoplasmic vesicle. In terms of biological role, during primary cilia disassembly, involved in cilia disassembly. Required specifically to control cilia retraction as well as the liberation and duplication of the basal body/centrosome. May act by stimulating AURKA activity at the basal body in a cell cycle-dependent manner. This Mus musculus (Mouse) protein is Ciliary microtubule-associated protein 3 (Cimap3).